The following is a 264-amino-acid chain: Thiazole synthase (264 aa).

K98 acts as the Schiff-base intermediate with DXP in catalysis. 1-deoxy-D-xylulose 5-phosphate contacts are provided by residues G159, A185–G186, and A207–T208.

It belongs to the ThiG family. Homotetramer. Forms heterodimers with either ThiH or ThiS.

It is found in the cytoplasm. The enzyme catalyses [ThiS sulfur-carrier protein]-C-terminal-Gly-aminoethanethioate + 2-iminoacetate + 1-deoxy-D-xylulose 5-phosphate = [ThiS sulfur-carrier protein]-C-terminal Gly-Gly + 2-[(2R,5Z)-2-carboxy-4-methylthiazol-5(2H)-ylidene]ethyl phosphate + 2 H2O + H(+). Its pathway is cofactor biosynthesis; thiamine diphosphate biosynthesis. In terms of biological role, catalyzes the rearrangement of 1-deoxy-D-xylulose 5-phosphate (DXP) to produce the thiazole phosphate moiety of thiamine. Sulfur is provided by the thiocarboxylate moiety of the carrier protein ThiS. In vitro, sulfur can be provided by H(2)S. This is Thiazole synthase from Mycobacterium ulcerans (strain Agy99).